Consider the following 527-residue polypeptide: NAD(P)H-quinone oxidoreductase chain 4 1 (527 aa).

Helical transmembrane passes span 5-25 (FPWL…LPII), 35-55 (WYSL…FCTG), 90-110 (LIIL…PVSF), 112-132 (PKLF…VFAV), 136-156 (LLFF…LSIW), 168-188 (FILY…TMAF), 211-231 (LLLY…FPLH), 242-262 (TAPA…YALL), 274-294 (AVFA…AALT), 310-330 (ISHM…GLSG), 331-351 (AVLQ…LVGA), 386-406 (LALP…GFAT), 416-436 (VLVI…LLSM), and 463-483 (VFII…PKIV).

Belongs to the complex I subunit 4 family.

The protein resides in the cellular thylakoid membrane. It catalyses the reaction a plastoquinone + NADH + (n+1) H(+)(in) = a plastoquinol + NAD(+) + n H(+)(out). It carries out the reaction a plastoquinone + NADPH + (n+1) H(+)(in) = a plastoquinol + NADP(+) + n H(+)(out). Functionally, NDH-1 shuttles electrons from NAD(P)H, via FMN and iron-sulfur (Fe-S) centers, to quinones in the respiratory chain. The immediate electron acceptor for the enzyme in this species is believed to be plastoquinone. Couples the redox reaction to proton translocation (for every two electrons transferred, four hydrogen ions are translocated across the cytoplasmic membrane), and thus conserves the redox energy in a proton gradient. In Trichodesmium erythraeum (strain IMS101), this protein is NAD(P)H-quinone oxidoreductase chain 4 1.